The sequence spans 123 residues: Small ribosomal subunit protein uS13 (123 aa).

The protein belongs to the universal ribosomal protein uS13 family. Part of the 30S ribosomal subunit. Forms a loose heterodimer with protein S19. Forms two bridges to the 50S subunit in the 70S ribosome.

Functionally, located at the top of the head of the 30S subunit, it contacts several helices of the 16S rRNA. In the 70S ribosome it contacts the 23S rRNA (bridge B1a) and protein L5 of the 50S subunit (bridge B1b), connecting the 2 subunits; these bridges are implicated in subunit movement. Contacts the tRNAs in the A and P-sites. This Anaplasma marginale (strain St. Maries) protein is Small ribosomal subunit protein uS13.